The following is a 122-amino-acid chain: Nodulation protein NolR (122 aa).

Residues 15 to 109 enclose the HTH arsR-type domain; the sequence is EKHEDAEIAA…ALSDIYGDDT (95 aa). The H-T-H motif DNA-binding region spans 49–68; the sequence is VGALAHKVGLSQSALSQHLS.

As to quaternary structure, binds to the operator site in homodimeric form.

Its function is as follows. Negative transacting factor controlling the nod regulon. May control the expression of nodD1, nodD2, nodD3 and nodABC genes. This Rhizobium meliloti (Ensifer meliloti) protein is Nodulation protein NolR (nolR).